The sequence spans 238 residues: Small ribosomal subunit protein eS4 (238 aa).

Residues Ile-38–Pro-109 enclose the S4 RNA-binding domain.

Belongs to the eukaryotic ribosomal protein eS4 family.

This is Small ribosomal subunit protein eS4 from Pyrobaculum neutrophilum (strain DSM 2338 / JCM 9278 / NBRC 100436 / V24Sta) (Thermoproteus neutrophilus).